We begin with the raw amino-acid sequence, 471 residues long: 7-hydroxymethyl chlorophyll a reductase, chloroplastic (471 aa).

The N-terminal 44 residues, 1 to 44 (MARCISFLSTSSSLPCATKPPCCSVSSVLPSSPSSHQCRGRKTS), are a transit peptide targeting the chloroplast.

This sequence belongs to the FrhB family. FAD is required as a cofactor. Iron-sulfur cluster serves as cofactor.

Its subcellular location is the plastid. The protein resides in the chloroplast. The catalysed reaction is chlorophyll a + 2 oxidized [2Fe-2S]-[ferredoxin] + H2O = 7(1)-hydroxychlorophyll a + 2 reduced [2Fe-2S]-[ferredoxin] + 2 H(+). Probable iron-sulfur flavoprotein that converts 7-hydroxymethyl chlorophyll a to chlorophyll a using ferredoxin as a reducing equivalent. Catalyzes the reduction of a hydroxymethyl group to a methyl group. The protein is 7-hydroxymethyl chlorophyll a reductase, chloroplastic (HCAR) of Oryza sativa subsp. japonica (Rice).